The following is a 215-amino-acid chain: Ribonuclease T (215 aa).

One can recognise an Exonuclease domain in the interval 20–194; sequence VVIDVETAGF…YDTERTAVLF (175 aa). Residues Asp23, Glu25, His181, and Asp186 each contribute to the Mg(2+) site. The active-site Proton donor/acceptor is His181.

The protein belongs to the RNase T family. Homodimer. Requires Mg(2+) as cofactor.

Its function is as follows. Trims short 3' overhangs of a variety of RNA species, leaving a one or two nucleotide 3' overhang. Responsible for the end-turnover of tRNA: specifically removes the terminal AMP residue from uncharged tRNA (tRNA-C-C-A). Also appears to be involved in tRNA biosynthesis. The protein is Ribonuclease T of Shigella dysenteriae serotype 1 (strain Sd197).